A 422-amino-acid polypeptide reads, in one-letter code: Protein TEX1 (422 aa).

5 WD repeats span residues 61-100 (ITPN…FDKS), 158-197 (GSKT…SSVC), 207-246 (EDND…LEVC), 251-290 (AHTG…CELI), and 293-332 (DLNS…LLHS). A disordered region spans residues 388–422 (KRRKNNGGGNNHNKRTSKNTDRIGKDRPSRFNSKK). The segment covering 405-416 (KNTDRIGKDRPS) has biased composition (basic and acidic residues).

Belongs to the THOC3 family. Component of the transcription/export (TREX) complex and the THO complex.

The protein localises to the nucleus. Functionally, component of the TREX complex, which operates in coupling transcription elongation to mRNA export. This chain is Protein TEX1 (TEX1), found in Saccharomyces cerevisiae (strain ATCC 204508 / S288c) (Baker's yeast).